The chain runs to 215 residues: L-fuculose phosphate aldolase (215 aa).

Residues Gly28–Asn29, Thr43–Gly44, and Ser71–Ser72 contribute to the substrate site. Glu73 acts as the Proton donor/acceptor in catalysis. Glu73, His92, His94, and His155 together coordinate Zn(2+).

This sequence belongs to the aldolase class II family. AraD/FucA subfamily. Homotetramer. Requires Zn(2+) as cofactor.

It catalyses the reaction L-fuculose 1-phosphate = (S)-lactaldehyde + dihydroxyacetone phosphate. It functions in the pathway carbohydrate degradation; L-fucose degradation; L-lactaldehyde and glycerone phosphate from L-fucose: step 3/3. Involved in the degradation of L-fucose and D-arabinose. Catalyzes the reversible cleavage of L-fuculose 1-phosphate (Fuc1P) to yield dihydroxyacetone phosphate (DHAP) and L-lactaldehyde. The chain is L-fuculose phosphate aldolase from Escherichia coli O6:H1 (strain CFT073 / ATCC 700928 / UPEC).